Consider the following 432-residue polypeptide: Gamma-glutamyl phosphate reductase (432 aa).

It belongs to the gamma-glutamyl phosphate reductase family.

The protein localises to the cytoplasm. It carries out the reaction L-glutamate 5-semialdehyde + phosphate + NADP(+) = L-glutamyl 5-phosphate + NADPH + H(+). It participates in amino-acid biosynthesis; L-proline biosynthesis; L-glutamate 5-semialdehyde from L-glutamate: step 2/2. Catalyzes the NADPH-dependent reduction of L-glutamate 5-phosphate into L-glutamate 5-semialdehyde and phosphate. The product spontaneously undergoes cyclization to form 1-pyrroline-5-carboxylate. This is Gamma-glutamyl phosphate reductase from Corynebacterium glutamicum (strain R).